Reading from the N-terminus, the 512-residue chain is 2-isopropylmalate synthase (512 aa).

A Pyruvate carboxyltransferase domain is found at leucine 5–leucine 268. 4 residues coordinate Mn(2+): aspartate 14, histidine 202, histidine 204, and asparagine 239. A regulatory domain region spans residues glycine 394–glycine 512.

The protein belongs to the alpha-IPM synthase/homocitrate synthase family. LeuA type 1 subfamily. In terms of assembly, homodimer. Requires Mn(2+) as cofactor.

Its subcellular location is the cytoplasm. It catalyses the reaction 3-methyl-2-oxobutanoate + acetyl-CoA + H2O = (2S)-2-isopropylmalate + CoA + H(+). The protein operates within amino-acid biosynthesis; L-leucine biosynthesis; L-leucine from 3-methyl-2-oxobutanoate: step 1/4. Its function is as follows. Catalyzes the condensation of the acetyl group of acetyl-CoA with 3-methyl-2-oxobutanoate (2-ketoisovalerate) to form 3-carboxy-3-hydroxy-4-methylpentanoate (2-isopropylmalate). The chain is 2-isopropylmalate synthase from Polaromonas naphthalenivorans (strain CJ2).